The following is a 501-amino-acid chain: Acid-sensing ion channel 1A (501 aa).

The Cytoplasmic segment spans residues 1–54 (MKTSVMDLKVEPMDIDFDQPPPLQVFAHTSTLHGISHIFSYEKITAKCCLWVVF). A helical membrane pass occupies residues 55–71 (FLSSLTFLMYVCIDRIQ). At 72–429 (FYLEYPHVTK…ETIEQRKAYE (358 aa)) the chain is on the extracellular side. 7 disulfides stabilise this stretch: cysteine 98–cysteine 199, cysteine 177–cysteine 184, cysteine 294–cysteine 369, cysteine 312–cysteine 365, cysteine 316–cysteine 363, cysteine 325–cysteine 347, and cysteine 327–cysteine 339. Asparagine 164 carries N-linked (GlcNAc...) asparagine glycosylation. Asparagine 370 carries N-linked (GlcNAc...) asparagine glycosylation. Residues 430-460 (VAGLLGDIGGQMGLFIGASILTILELFDYLY) traverse the membrane as a discontinuously helical segment. The GAS motif; ion selectivity filter motif lies at 446 to 448 (GAS). The Cytoplasmic segment spans residues 461–501 (EVMKYRLCRCSNKKHHNNNNNTDHNAVFSLDDVNCHVSKFH).

It belongs to the amiloride-sensitive sodium channel (TC 1.A.6) family. ASIC1 subfamily. Homotrimer. Heterotrimer; with other ASIC proteins producing channel with different properties. Interacts with asic1c. As to expression, expressed in central nervous system. Faintly expressed in the trunk, presumably in dorsal root ganglia.

It is found in the cell membrane. The protein resides in the postsynaptic cell membrane. It localises to the cell projection. Its subcellular location is the dendrite. The enzyme catalyses Na(+)(in) = Na(+)(out). It carries out the reaction K(+)(in) = K(+)(out). The catalysed reaction is Li(+)(in) = Li(+)(out). It catalyses the reaction Ca(2+)(in) = Ca(2+)(out). With respect to regulation, inhibited by the diuretic drug amiloride. Functionally, forms voltage-independent, pH-gated trimeric sodium channels that act as postsynaptic excitatory receptors in the nervous system, playing a crucial role in regulating synaptic plasticity, learning, and memory. Upon extracellular pH drop this channel elicits transient, fast activating, and completely desensitizing inward currents. Displays high selectivity for sodium ions but can also permit the permeation of other cations. The sequence is that of Acid-sensing ion channel 1A (asic1a) from Danio rerio (Zebrafish).